A 417-amino-acid chain; its full sequence is Mitochondrial tRNA-specific 2-thiouridylase 1 (417 aa).

ATP-binding positions include 32–39 and M58; that span reads AMSSGVDS. Positions 122 to 124 are interaction with target base in tRNA; that stretch reads NPD. C127 serves as the catalytic Nucleophile. A disulfide bond links C127 and C229. Residue G154 coordinates ATP. The interaction with tRNA stretch occupies residues 179–181; that stretch reads KDQ. The Cysteine persulfide intermediate role is filled by C229. An interaction with tRNA region spans residues 354–355; sequence RS.

This sequence belongs to the MnmA/TRMU family.

The protein resides in the mitochondrion. It catalyses the reaction 5-taurinomethyluridine(34) in tRNA + S-sulfanyl-L-cysteinyl-[protein] + AH2 + ATP = 5-taurinomethyl-2-thiouridine(34) in tRNA + L-cysteinyl-[protein] + A + AMP + diphosphate + H(+). In terms of biological role, catalyzes the 2-thiolation of uridine at the wobble position (U34) of mitochondrial tRNA(Lys), tRNA(Glu) and tRNA(Gln). Required for the formation of 5-taurinomethyl-2-thiouridine (tm5s2U) of mitochondrial tRNA(Lys), tRNA(Glu), and tRNA(Gln) at the wobble position. ATP is required to activate the C2 atom of the wobble base. In Saccharomyces cerevisiae (strain ATCC 204508 / S288c) (Baker's yeast), this protein is Mitochondrial tRNA-specific 2-thiouridylase 1 (SLM3).